The primary structure comprises 730 residues: Dynein axonemal intermediate chain 7 (730 aa).

Basic residues predominate over residues 1–14; that stretch reads MAPKSKKAPSKKKM. The interval 1 to 20 is disordered; that stretch reads MAPKSKKAPSKKKMTKAERL.

This sequence belongs to the DNAI7 family. As to quaternary structure, part of the multisubunit axonemal dynein complex formed at least of two heavy chains and a number of intermediate and light chains. Interacts with tubulin. Associates with microtubule. In terms of processing, ubiquitinated. Ubiquitination leads to its degradation through the 26S proteasome. Ubiquitin-proteasome-mediated DNAI7 degradation occurs in mitosis. In terms of tissue distribution, high expressed in lung, kidney, and testis.

The protein resides in the cell projection. Its subcellular location is the cilium. It localises to the cytoplasm. Via its association with the multisubunit axonemal dynein complex, is potentially involved in the regulation of cilia function. May also act as a cell cycle regulator. This chain is Dynein axonemal intermediate chain 7 (Dnai7), found in Mus musculus (Mouse).